An 85-amino-acid polypeptide reads, in one-letter code: Beta-toxin Ct6 (85 aa).

Residues 1–18 (MKTFVLALCLVLIGMVYA) form the signal peptide. Residues 19–84 (KDGYLVSKHT…VYPLPNKSCG (66 aa)) enclose the LCN-type CS-alpha/beta domain. Disulfide bonds link Cys30–Cys83, Cys34–Cys59, Cys43–Cys64, and Cys47–Cys66. A Cysteine amide modification is found at Cys83.

Belongs to the long (4 C-C) scorpion toxin superfamily. Sodium channel inhibitor family. Beta subfamily. In terms of tissue distribution, expressed by the venom gland.

It localises to the secreted. Beta toxins bind voltage-independently at site-4 of sodium channels (Nav) and shift the voltage of activation toward more negative potentials thereby affecting sodium channel activation and promoting spontaneous and repetitive firing. The sequence is that of Beta-toxin Ct6 from Centruroides tecomanus (Scorpion).